The primary structure comprises 92 residues: MSGNYYYPLDLSWSTEEISSVLHFLNKVELAYEKKVDAKQLLDSYKTYKTIVKSKAQEKQIDRDFQKVSGYSTYQVVKKAKAIEKGFFSLGN.

The protein belongs to the UPF0223 family.

This Streptococcus pyogenes serotype M1 protein is UPF0223 protein SPy_1248/M5005_Spy0958.